The primary structure comprises 211 residues: Suppressor of cytokine signaling 1 (211 aa).

The interval 1-53 (MVAHNQVAADNAVSTAAEPRRRPEPSSSSSSSPAAPARPRPCPAVPAPAPGDT) is disordered. A compositionally biased stretch (low complexity) spans 25 to 35 (PSSSSSSSPAA). The segment covering 36–49 (PARPRPCPAVPAPA) has biased composition (pro residues). A kinase inhibitory region (KIR) region spans residues 55–66 (FRTFRSHADYRR). Residues 67–78 (ITRASALLDACG) are extended SH2 subdomain (ESS). Residues 79–174 (FYWGPLSVHG…PLRQRRVRPL (96 aa)) form the SH2 domain. Residues 161–210 (MLGAPLRQRRVRPLQELCRQRIVATVGRENLARIPLNPVLRDYLSSFPFQ) enclose the SOCS box domain. The interval 173-182 (PLQELCRQRI) is interaction with Elongin BC complex.

It belongs to the SOCS1 family. In terms of assembly, interacts with multiple activated signaling proteins of the tyrosine kinase signaling pathway including JAK family kinases, TEC, KIT, GRB2 and VAV. Binding to JAKs is mediated through the KIR and SH2 domains to a phosphorylated tyrosine residue within the JAK JH1 domain. Binds the SH3 domain of GRB2 via diproline determinants in the N-terminus, and the N-terminal regulatory domain of VAV. Interacts with the Elongin BC complex (ELOB and ELOC). Component of an ECS CBC(SOCS1) E3 ubiquitin-protein ligase complex which contains Elongin BC, CUL5, RBX1 and SOCS1. Interacts (via SH2 domain and SOCS box) with TRIM8. Interacts with AXL, CUL2 and FGFR3. Interacts with INSR. Interacts with TRIM8. Interacts with DCUN1D1. Interacts with IFNGR1. Expressed in all tissues with high expression in spleen, small intestine and peripheral blood leukocytes.

It localises to the nucleus. The protein resides in the cytoplasmic vesicle. It participates in protein modification; protein ubiquitination. Functionally, essential negative regulator of type I and type II interferon (IFN) signaling, as well as that of other cytokines, including IL2, IL4, IL6 and leukemia inhibitory factor (LIF). Downregulates cytokine signaling by inhibiting the JAK/STAT signaling pathway. Acts by binding to JAK proteins and to IFNGR1 and inhibiting their kinase activity. In vitro, suppresses Tec protein-tyrosine activity. Regulates IFN-gamma (IFNG)-mediated sensory neuron survival. Probable substrate recognition component of an ECS (Elongin BC-CUL2/5-SOCS-box protein) E3 ubiquitin ligase complex which mediates the ubiquitination and subsequent proteasomal degradation of target proteins. This is Suppressor of cytokine signaling 1 (SOCS1) from Homo sapiens (Human).